Here is a 397-residue protein sequence, read N- to C-terminus: 2-aminoadipate transaminase (397 aa).

G40 provides a ligand contact to substrate. Pyridoxal 5'-phosphate contacts are provided by residues Y70, S100–Q101, N174, D202–Y205, S235–S237, and R245. A substrate-binding site is contributed by N174. K263 is modified (N6-(pyridoxal phosphate)lysine). R368 is a substrate binding site.

It belongs to the class-I pyridoxal-phosphate-dependent aminotransferase family. Homodimer. The cofactor is pyridoxal 5'-phosphate.

The catalysed reaction is L-2-aminoadipate + 2-oxoglutarate = 2-oxoadipate + L-glutamate. Its pathway is amino-acid biosynthesis; L-lysine biosynthesis via AAA pathway; L-alpha-aminoadipate from 2-oxoglutarate: step 5/5. Functionally, catalyzes the transfer of an amino group between 2-oxoadipate (2-OA) and glutamate (Glu) to yield alpha-aminodipate (AAA). It can also transaminate glutamate, leucine, and aromatic amino acids. It also contributes in the biosynthesis of other amino acids such as leucine. This chain is 2-aminoadipate transaminase (lysN), found in Thermus thermophilus (strain ATCC BAA-163 / DSM 7039 / HB27).